The chain runs to 215 residues: Cytochrome b6 (215 aa).

A helical membrane pass occupies residues 32 to 52 (IFYCLGGITLTCFLVQVATGF). C35 contacts heme c. Residues H86 and H100 each coordinate heme b. 3 helical membrane passes run 90–110 (ASMM…TGGF), 116–136 (LTWV…VTGY), and 186–206 (LHTF…FLMI). Heme b contacts are provided by H187 and H202.

This sequence belongs to the cytochrome b family. PetB subfamily. The 4 large subunits of the cytochrome b6-f complex are cytochrome b6, subunit IV (17 kDa polypeptide, PetD), cytochrome f and the Rieske protein, while the 4 small subunits are PetG, PetL, PetM and PetN. The complex functions as a dimer. It depends on heme b as a cofactor. Heme c is required as a cofactor.

It localises to the plastid. The protein resides in the chloroplast thylakoid membrane. Its function is as follows. Component of the cytochrome b6-f complex, which mediates electron transfer between photosystem II (PSII) and photosystem I (PSI), cyclic electron flow around PSI, and state transitions. The protein is Cytochrome b6 of Ostreococcus tauri.